Here is a 225-residue protein sequence, read N- to C-terminus: 2-C-methyl-D-erythritol 4-phosphate cytidylyltransferase (225 aa).

The protein belongs to the IspD/TarI cytidylyltransferase family. IspD subfamily.

It carries out the reaction 2-C-methyl-D-erythritol 4-phosphate + CTP + H(+) = 4-CDP-2-C-methyl-D-erythritol + diphosphate. The protein operates within isoprenoid biosynthesis; isopentenyl diphosphate biosynthesis via DXP pathway; isopentenyl diphosphate from 1-deoxy-D-xylulose 5-phosphate: step 2/6. Functionally, catalyzes the formation of 4-diphosphocytidyl-2-C-methyl-D-erythritol from CTP and 2-C-methyl-D-erythritol 4-phosphate (MEP). This Haemophilus influenzae (strain PittGG) protein is 2-C-methyl-D-erythritol 4-phosphate cytidylyltransferase.